Consider the following 931-residue polypeptide: Isoleucine--tRNA ligase (931 aa).

The 'HIGH' region motif lies at 57 to 67; the sequence is PFANGNIHMGH. Glu556 provides a ligand contact to L-isoleucyl-5'-AMP. The 'KMSKS' region signature appears at 597–601; it reads KMSKS. Residue Lys600 participates in ATP binding. 4 residues coordinate Zn(2+): Cys890, Cys893, Cys910, and Cys913.

It belongs to the class-I aminoacyl-tRNA synthetase family. IleS type 1 subfamily. In terms of assembly, monomer. The cofactor is Zn(2+).

It localises to the cytoplasm. It catalyses the reaction tRNA(Ile) + L-isoleucine + ATP = L-isoleucyl-tRNA(Ile) + AMP + diphosphate. Its function is as follows. Catalyzes the attachment of isoleucine to tRNA(Ile). As IleRS can inadvertently accommodate and process structurally similar amino acids such as valine, to avoid such errors it has two additional distinct tRNA(Ile)-dependent editing activities. One activity is designated as 'pretransfer' editing and involves the hydrolysis of activated Val-AMP. The other activity is designated 'posttransfer' editing and involves deacylation of mischarged Val-tRNA(Ile). The protein is Isoleucine--tRNA ligase of Lactobacillus delbrueckii subsp. bulgaricus (strain ATCC 11842 / DSM 20081 / BCRC 10696 / JCM 1002 / NBRC 13953 / NCIMB 11778 / NCTC 12712 / WDCM 00102 / Lb 14).